A 309-amino-acid chain; its full sequence is Glutaminase (309 aa).

7 residues coordinate substrate: S65, N117, E162, N169, Y193, Y245, and V263.

It belongs to the glutaminase family. As to quaternary structure, homotetramer.

It catalyses the reaction L-glutamine + H2O = L-glutamate + NH4(+). In Shouchella clausii (strain KSM-K16) (Alkalihalobacillus clausii), this protein is Glutaminase.